Consider the following 565-residue polypeptide: Probable transcription factor lepB (565 aa).

A fungal specific transcription factor domain region spans residues 52-259 (KRYAEDVTYL…PRNLDDRDLD (208 aa)).

Its subcellular location is the nucleus. Its function is as follows. Probable transcription factor; part of the gene cluster 23 that mediates the biosynthesis of a family of 2-pyridones known as leporins. This Aspergillus flavus (strain ATCC 200026 / FGSC A1120 / IAM 13836 / NRRL 3357 / JCM 12722 / SRRC 167) protein is Probable transcription factor lepB.